We begin with the raw amino-acid sequence, 1524 residues long: DNA-directed RNA polymerase subunit beta' (1524 aa).

Positions 58, 60, 73, and 76 each coordinate Zn(2+). 3 residues coordinate Mg(2+): D739, D741, and D743. Residues C1112, C1194, C1201, and C1204 each coordinate Zn(2+). The disordered stretch occupies residues 1502 to 1524 (AVEAKEKEAPRRPVRREQPGKGL).

Belongs to the RNA polymerase beta' chain family. The RNAP catalytic core consists of 2 alpha, 1 beta, 1 beta' and 1 omega subunit. When a sigma factor is associated with the core the holoenzyme is formed, which can initiate transcription. Mg(2+) is required as a cofactor. Zn(2+) serves as cofactor.

The enzyme catalyses RNA(n) + a ribonucleoside 5'-triphosphate = RNA(n+1) + diphosphate. DNA-dependent RNA polymerase catalyzes the transcription of DNA into RNA using the four ribonucleoside triphosphates as substrates. The polypeptide is DNA-directed RNA polymerase subunit beta' (Thermus aquaticus).